A 423-amino-acid chain; its full sequence is Glutamate-1-semialdehyde 2,1-aminomutase (423 aa).

An N6-(pyridoxal phosphate)lysine modification is found at Lys-258.

Belongs to the class-III pyridoxal-phosphate-dependent aminotransferase family. HemL subfamily. Pyridoxal 5'-phosphate is required as a cofactor.

The protein resides in the cytoplasm. The catalysed reaction is (S)-4-amino-5-oxopentanoate = 5-aminolevulinate. It participates in porphyrin-containing compound metabolism; protoporphyrin-IX biosynthesis; 5-aminolevulinate from L-glutamyl-tRNA(Glu): step 2/2. The protein is Glutamate-1-semialdehyde 2,1-aminomutase of Pyrobaculum arsenaticum (strain DSM 13514 / JCM 11321 / PZ6).